The chain runs to 462 residues: NAD-capped RNA hydrolase NUDT12 (462 aa).

ANK repeat units lie at residues 11–40, 45–74, and 78–98; these read EIVT…SLLN, NGWT…DRSI, and SRQT…ANLL. Lys-185 bears the N6-succinyllysine mark. Residues Cys-284 and Cys-287 each coordinate Zn(2+). An N6-succinyllysine modification is found at Lys-292. Positions 302 and 307 each coordinate Zn(2+). Substrate is bound by residues Tyr-318, 354–356, Glu-370, Glu-374, and Glu-415; that span reads AGF. In terms of domain architecture, Nudix hydrolase spans 319-453; sequence PRVDPVVIMQ…SRAIAHQLIK (135 aa). Mg(2+)-binding residues include Ala-354, Glu-370, Glu-374, and Glu-415. The Nudix box signature appears at 355–376; the sequence is GFIEPGETIEDAVRREVEEESG. The Microbody targeting signal signature appears at 460-462; that stretch reads PNL.

This sequence belongs to the Nudix hydrolase family. NudC subfamily. As to quaternary structure, homodimer. Homodimerization is essential for its catalytic activity and protein stability. Interacts (via ANK repeats) with BLMH. Mg(2+) is required as a cofactor. Zn(2+) serves as cofactor.

Its subcellular location is the cytoplasm. The protein resides in the peroxisome. It is found in the cytoplasmic granule. It catalyses the reaction a 5'-end NAD(+)-phospho-ribonucleoside in mRNA + H2O = a 5'-end phospho-adenosine-phospho-ribonucleoside in mRNA + beta-nicotinamide D-ribonucleotide + 2 H(+). The catalysed reaction is NAD(+) + H2O = beta-nicotinamide D-ribonucleotide + AMP + 2 H(+). It carries out the reaction NADH + H2O = reduced beta-nicotinamide D-ribonucleotide + AMP + 2 H(+). The enzyme catalyses NADPH + H2O = reduced beta-nicotinamide D-ribonucleotide + adenosine 2',5'-bisphosphate + 2 H(+). In terms of biological role, mRNA decapping enzyme that specifically removes the nicotinamide adenine dinucleotide (NAD) cap from a subset of mRNAs by hydrolyzing the diphosphate linkage to produce nicotinamide mononucleotide (NMN) and 5' monophosphate mRNA. The NAD-cap is present at the 5'-end of some RNAs; in contrast to the canonical N7 methylguanosine (m7G) cap, the NAD cap promotes mRNA decay. Preferentially acts on NAD-capped transcripts in response to nutrient stress. Also acts on free nicotinamide adenine dinucleotide molecules: hydrolyzes NAD(H) into NMN(H) and AMP, and NADPH into NMNH and 2',5'-ADP. May act to regulate the concentration of peroxisomal nicotinamide nucleotide cofactors required for oxidative metabolism in this organelle. Regulates the levels of circadian clock components PER1, PER2, PER3 and CRY2 in the liver. This Pongo abelii (Sumatran orangutan) protein is NAD-capped RNA hydrolase NUDT12.